A 508-amino-acid polypeptide reads, in one-letter code: Adenylosuccinate synthetase 1, chloroplastic (508 aa).

The transit peptide at 1–56 (MNISILRLDSNPITTATSPATATANHRSGILGCYNGTYSCRLNQLQQRKKNPSIIV) directs the protein to the chloroplast. GTP-binding positions include 95–101 (GDEGKGK) and 123–125 (GHT). D96 acts as the Proton acceptor in catalysis. 2 residues coordinate Mg(2+): D96 and G123. IMP-binding positions include 96 to 99 (DEGK), 121 to 124 (NAGH), T213, R227, Q307, T322, and R386. The active-site Proton donor is the H124. 382 to 388 (TTTGRPR) serves as a coordination point for substrate. Residues R388, 414–416 (KLD), and 497–499 (GIG) contribute to the GTP site.

The protein belongs to the adenylosuccinate synthetase family. Homodimer. Requires Mg(2+) as cofactor.

The protein localises to the plastid. It is found in the chloroplast. The enzyme catalyses IMP + L-aspartate + GTP = N(6)-(1,2-dicarboxyethyl)-AMP + GDP + phosphate + 2 H(+). It participates in purine metabolism; AMP biosynthesis via de novo pathway; AMP from IMP: step 1/2. Functionally, plays an important role in the de novo pathway and in the salvage pathway of purine nucleotide biosynthesis. Catalyzes the first committed step in the biosynthesis of AMP from IMP. The polypeptide is Adenylosuccinate synthetase 1, chloroplastic (Capsicum frutescens (Cayenne pepper)).